Reading from the N-terminus, the 351-residue chain is Dysbindin (351 aa).

S11 bears the Phosphoserine mark. A coiled-coil region spans residues 88–181 (EKKKTSLVEL…ELDAEHAQKV (94 aa)). The tract at residues 173 to 331 (LDAEHAQKVL…DEEEVQVDTA (159 aa)) is dysbindin. The Nuclear export signal motif lies at 243–256 (LMDISDQEALDVFL). The interval 286–351 (PNPSELRAKP…TPDGGEDSDS (66 aa)) is disordered. The segment covering 296-305 (PSSSSTCTDS) has biased composition (polar residues). 3 positions are modified to phosphoserine: S316, S321, and S349.

This sequence belongs to the dysbindin family. In terms of assembly, interacts (via its coiled coil domain) with KXD1. Interacts with CMYA5, PI4K2 and RNF151. Component of the biogenesis of lysosome-related organelles complex 1 (BLOC-1) composed of at least BLOC1S1, BLOC1S2, BLOC1S3, BLOC1S4, BLOC1S5, BLOC1S6, DTNBP1/BLOC1S7 and SNAPIN/BLOC1S8. Interacts directly in the complex with BLOC1S5, BLOC1S6 and SNAPIN/BLOC1S8. The BLOC-1 complex associates with the AP-3 protein complex and membrane protein cargos. This BLOC-1 complex also associates with the BLOC-2 complex in endosomes. Binds to DTNA and DTNB but may not be a physiological binding partner. Interacts (isoform 1 and isoform 2 only) with the DNA-dependent protein kinase complex DNA-PK; the interaction phosphorylates DTNBP1 in vitro. Interacts directly in this complex with XRCC5 and XRCC6. Interacts with AP3M1, AP3B2 and TRIM32. Interacts with XPO1; the interaction exports DTNBP1 out of the nucleus. Post-translationally, ubiquitinated by TRIM32. Ubiquitination leads to DTNBP1 degradation. Isoforms 1 and 2 highly phosphorylated by PRKDC in vitro. Isoform 3 only weakly phosphorylated by PRKDC in vitro. In terms of tissue distribution, detected in brain, in neurons and in neuropil. Isoform 1 is expressed in the cerebral cortex, and hippocampal frontal (HF). Specific expression in the posterior half of the superior temporal gyrus (pSTG). Higher expression of isoform 2 and 3 in the HF than in the pSTG while isoform 1 shows no difference in expression in these areas. In the HF, detected in dentate gyrus (DG) and in pyramidal cells of hippocampus CA2 and CA3 (at protein level). Expressed in all principal neuronal populations of the HF, namely pyramidal neurons in the subiculum and CA1-3, granule cells in the dense cell layer of the DG (DGg), and polymorph cells in the hilus of the DG (DGh). Maximal levels in CA2, CA3, and DGh. Isoform 2 not expressed in the cerebral cortex.

It is found in the cytoplasm. The protein localises to the cytoplasmic vesicle membrane. Its subcellular location is the endosome membrane. It localises to the melanosome membrane. The protein resides in the postsynaptic density. It is found in the endoplasmic reticulum. The protein localises to the nucleus. Its subcellular location is the cytoplasmic vesicle. It localises to the secretory vesicle. The protein resides in the synaptic vesicle membrane. It is found in the postsynaptic cell membrane. Its function is as follows. Component of the BLOC-1 complex, a complex that is required for normal biogenesis of lysosome-related organelles (LRO), such as platelet dense granules and melanosomes. In concert with the AP-3 complex, the BLOC-1 complex is required to target membrane protein cargos into vesicles assembled at cell bodies for delivery into neurites and nerve terminals. The BLOC-1 complex, in association with SNARE proteins, is also proposed to be involved in neurite extension. Associates with the BLOC-2 complex to facilitate the transport of TYRP1 independent of AP-3 function. Plays a role in synaptic vesicle trafficking and in neurotransmitter release. Plays a role in the regulation of cell surface exposure of DRD2. May play a role in actin cytoskeleton reorganization and neurite outgrowth. May modulate MAPK8 phosphorylation. Appears to promote neuronal transmission and viability through regulating the expression of SNAP25 and SYN1, modulating PI3-kinase-Akt signaling and influencing glutamatergic release. Regulates the expression of SYN1 through binding to its promoter. Modulates prefrontal cortical activity via the dopamine/D2 pathway. This is Dysbindin (DTNBP1) from Homo sapiens (Human).